The chain runs to 387 residues: MGRVGVLLLNLGGPDRLEDVRPFLFNLFSDPEIIRLPVPWLQKPLAWLISTLRSRKSQENYLQIGGGSPLRKITEAQAEALEKRLEEIGHSVQVYIGMRYWHPFTEEAIARIKRDRIQKLVILPLYPQFSISTSGSSFRVLEEIWKQDPSLKQIEYSLIPSWYDNPGYLEAMADLISQELGQYSNPDTVHIFFSAHGVPQSYVDEAGDPYQKEIEECTRLIMKTLNRPNDYTLAYQSRVGPVEWLKPYTEDALKELGEQGIKEILVIPISFVSEHIETLQEIDIEYREVAEEAGIDHFQRVPALNTHPIFIDSLAQLVINSLTENSYTFEEITRPKKNMKMYPQERWEWGMTTAAEVWNGRLAMIGFIALLIELISGHGPLHFVGLL.

Fe cation is bound by residues histidine 196 and glutamate 277.

The protein belongs to the ferrochelatase family.

The protein localises to the cytoplasm. The enzyme catalyses heme b + 2 H(+) = protoporphyrin IX + Fe(2+). It functions in the pathway porphyrin-containing compound metabolism; protoheme biosynthesis; protoheme from protoporphyrin-IX: step 1/1. Functionally, catalyzes the ferrous insertion into protoporphyrin IX. In Gloeothece citriformis (strain PCC 7424) (Cyanothece sp. (strain PCC 7424)), this protein is Ferrochelatase.